A 489-amino-acid polypeptide reads, in one-letter code: MTFRHCVAVDLGASSGRVMLARYDSKHRTLTLREIHRFVNCLQKTDGFDTWDIDSLEKDIRLGLKKVCNEGILIDSIGIDTWGVDYVLLDKQGQRVGLPVSYRDNRTTGIMPQALVQIGKSEIYRRSGIQFLPFNTIYQLRALTKQQPELTAQVAHALLMPDYFSYRLTGEMNWEYTNATTTQLVNINTDDWDDTLLAWTGAKKSWFGRPSHPGNVIGDWICPQGNRIPVVAVASHDTASAVIASPLANKHSAYLSSGTWSLMGFESKKPYTTDEALAANITNEGGAEGRYRVLKNIMGLWLLQRVLKERRITDLPALIAQTEALPACRFLINPNDDRFINPDDMRAEIQAACRETDQPVPVSDAELARCIFDSLALLYADILHELANLRGEKFTQLHIVGGGCQNALLNQLCADACGIRVMAGPVEASTLGNIGIQLMTLDELNNVDDFRQVVSANYDLTTYIPNPDSEIARHVAQFQPKRQTKELCA.

13–17 (ASSGR) lines the ATP pocket. A disulfide bridge connects residues Cys-68 and Cys-222. Substrate contacts are provided by residues Gly-83 and 236 to 238 (HDT). Catalysis depends on Asp-237, which acts as the Proton acceptor. Thr-259 is a binding site for ATP. Residue Asn-296 coordinates substrate. Position 304 (Gln-304) interacts with ATP. Cys-353 and Cys-370 are joined by a disulfide. Gly-402 is an ATP binding site. Cys-413 and Cys-417 form a disulfide bridge.

It belongs to the rhamnulokinase family. It depends on Mg(2+) as a cofactor.

It catalyses the reaction L-rhamnulose + ATP = L-rhamnulose 1-phosphate + ADP + H(+). The protein operates within carbohydrate degradation; L-rhamnose degradation; glycerone phosphate from L-rhamnose: step 2/3. Involved in the catabolism of L-rhamnose (6-deoxy-L-mannose). Catalyzes the transfer of the gamma-phosphate group from ATP to the 1-hydroxyl group of L-rhamnulose to yield L-rhamnulose 1-phosphate. The polypeptide is Rhamnulokinase (Salmonella paratyphi B (strain ATCC BAA-1250 / SPB7)).